The sequence spans 341 residues: L-threonine 3-dehydrogenase (341 aa).

Cys38 contacts Zn(2+). Active-site charge relay system residues include Thr40 and His43. Residues His63, Glu64, Cys93, Cys96, Cys99, and Cys107 each contribute to the Zn(2+) site. NAD(+)-binding positions include Ile175, Asp195, Arg200, 262–264 (LGI), and 286–287 (IY).

The protein belongs to the zinc-containing alcohol dehydrogenase family. In terms of assembly, homotetramer. It depends on Zn(2+) as a cofactor.

The protein localises to the cytoplasm. It carries out the reaction L-threonine + NAD(+) = (2S)-2-amino-3-oxobutanoate + NADH + H(+). It participates in amino-acid degradation; L-threonine degradation via oxydo-reductase pathway; glycine from L-threonine: step 1/2. In terms of biological role, catalyzes the NAD(+)-dependent oxidation of L-threonine to 2-amino-3-ketobutyrate. This chain is L-threonine 3-dehydrogenase, found in Salmonella gallinarum (strain 287/91 / NCTC 13346).